Consider the following 172-residue polypeptide: Putative defense protein (172 aa).

Residues 1–21 (MKLVVAAVLAMAASRWRRLSA) form the signal peptide. Residues 22–172 (HGQVPSSTCA…LRQLDNAVAA (151 aa)) form the Reelin domain.

It belongs to the insect defense protein family. As to expression, in adults, in hemolymph.

It localises to the secreted. Its function is as follows. May have antimicrobial activity. This is Putative defense protein from Locusta migratoria (Migratory locust).